A 728-amino-acid chain; its full sequence is Ribosome biogenesis protein bop1-B (728 aa).

The segment at 1-114 (MKRGSKRESG…ENDSSDEEDI (114 aa)) is disordered. Acidic residues predominate over residues 50–67 (SGTDSSDDEEDHSSEEVQ). WD repeat units follow at residues 393-432 (GHKD…CMKS), 434-474 (VLEG…RLLC), 514-556 (KHQK…SQNP), 559-597 (KNKG…LTKK), 600-639 (TNCK…KPYK), 643-682 (HHKK…DLLQ), and 698-728 (HRDL…RLFT).

The protein belongs to the WD repeat BOP1/ERB1 family. In terms of assembly, component of the PeBoW complex, composed of bop1, pes1 and wdr12. The complex is held together by bop1, which interacts with pes1 via its N-terminal domain and with wdr12 via a high-affinity interaction between the seven-bladed beta-propeller domains of the 2 proteins. The PeBoW complex associates with the 66S pre-ribosome.

The protein localises to the nucleus. It is found in the nucleolus. It localises to the nucleoplasm. Functionally, component of the PeBoW complex, which is required for maturation of 28S and 5.8S ribosomal RNAs and formation of the 60S ribosome. The polypeptide is Ribosome biogenesis protein bop1-B (bop1-b) (Xenopus laevis (African clawed frog)).